The primary structure comprises 83 residues: Mu-theraphotoxin-Hhn2o (83 aa).

The signal sequence occupies residues 1–21 (MKASMFLALAGLVLLFVVGYA). Residues 22–48 (SESEEKEFPIELLSKIFAVDVFKGEER) constitute a propeptide that is removed on maturation. Cystine bridges form between C50–C65, C57–C70, and C64–C77. L81 is modified (leucine amide).

The protein belongs to the neurotoxin 10 (Hwtx-1) family. 15 (Hntx-3) subfamily. In terms of assembly, monomer. Expressed by the venom gland.

Its subcellular location is the secreted. In terms of biological role, lethal neurotoxin. Selectively blocks tetrodotoxin-sensitive voltage-gated sodium channels (Nav). Does not affect tetrodotoxin-resistant voltage-gated sodium channels or calcium channels. The polypeptide is Mu-theraphotoxin-Hhn2o (Cyriopagopus hainanus (Chinese bird spider)).